Here is a 4306-residue protein sequence, read N- to C-terminus: Cytoplasmic dynein 2 heavy chain 1 (4306 aa).

Residues 1–1650 (MAGSLSDVRK…YVQMVDSELQ (1650 aa)) are stem. 145 to 152 (LGVVLRKS) contributes to the ATP binding site. The stretch at 669-696 (KELEGYIQKLQNAAERLATENRRLRKWH) forms a coiled coil. 4 AAA regions span residues 1651-1875 (YTYE…VLRG), 1941-2161 (SALK…KQND), 2249-2505 (LTAD…WVLG), and 2617-2862 (HYGR…ESCK). ATP is bound by residues 1689 to 1696 (GPAGTGKT), 1979 to 1986 (GPSGAGKS), 2291 to 2298 (GPEGCGKG), and 2655 to 2662 (GRSGVGRR). Positions 2880-3168 (AISSSKRKEL…AEVSKAQETI (289 aa)) are stalk. Coiled coils occupy residues 2896–2981 (LQAG…KEVQ), 3108–3199 (LETE…LATL), and 3407–3441 (IQHE…SLLE). AAA regions lie at residues 3243 to 3472 (LCTE…LIQD) and 3689 to 3904 (MALF…VIDR).

It belongs to the dynein heavy chain family. As to quaternary structure, the cytoplasmic dynein complex 2 is probably composed by a heavy chain DYNC2H1 homodimer and a number of DYNC2LI1 light intermediate chains. In terms of tissue distribution, widely expressed both in ciliated and unciliated tissues. Detected in brain and testis (at protein level).

It is found in the cytoplasm. The protein localises to the cytoskeleton. Its subcellular location is the cilium axoneme. The protein resides in the cell membrane. Functionally, may function as a motor for intraflagellar retrograde transport. Functions in cilia biogenesis. May play a role in transport between endoplasmic reticulum and Golgi or organization of the Golgi in cells. The sequence is that of Cytoplasmic dynein 2 heavy chain 1 (Dync2h1) from Rattus norvegicus (Rat).